Consider the following 658-residue polypeptide: Endoglucanase 3 (658 aa).

The N-terminal stretch at 1 to 23 is a signal peptide; it reads MQLKNFYPKMSVLGIATVMALTA. A lipid anchor (N-palmitoyl cysteine) is attached at cysteine 24. The S-diacylglycerol cysteine moiety is linked to residue cysteine 24. Residues 24–265 constitute a propeptide that is removed on maturation; sequence CGDENTQALF…TDSLFIDNIY (242 aa). Residues 42-83 are disordered; sequence ENQVPVSSSDMSPTSSDAVIDPTSSSAAVVDPSTLPAEGPIT. Positions 45 to 58 are enriched in low complexity; that stretch reads VPVSSSDMSPTSSD. In terms of domain architecture, CBM11 spans 87 to 277; it reads GLGTLVDDFE…DSSEVEKDQP (191 aa). Glutamate 448 serves as the catalytic Proton donor. Glutamate 597 acts as the Nucleophile in catalysis.

The protein belongs to the glycosyl hydrolase 5 (cellulase A) family. In terms of assembly, monomer. May be a lipoprotein and may be glycosylated.

Its subcellular location is the membrane. The enzyme catalyses Endohydrolysis of (1-&gt;4)-beta-D-glucosidic linkages in cellulose, lichenin and cereal beta-D-glucans.. Functionally, exhibits both endoglucanase and cellobiosidase activities. The chain is Endoglucanase 3 (cel-3) from Fibrobacter succinogenes (strain ATCC 19169 / S85).